Here is a 339-residue protein sequence, read N- to C-terminus: Quinolinate synthase (339 aa).

Positions 63 and 81 each coordinate iminosuccinate. [4Fe-4S] cluster is bound at residue Cys126. Residues 152 to 154 (YVN) and Ser169 each bind iminosuccinate. Residue Cys211 participates in [4Fe-4S] cluster binding. Iminosuccinate contacts are provided by residues 237 to 239 (HPE) and Thr254. Cys297 is a binding site for [4Fe-4S] cluster.

Belongs to the quinolinate synthase family. Type 2 subfamily. The cofactor is [4Fe-4S] cluster.

The protein localises to the cytoplasm. The catalysed reaction is iminosuccinate + dihydroxyacetone phosphate = quinolinate + phosphate + 2 H2O + H(+). It functions in the pathway cofactor biosynthesis; NAD(+) biosynthesis; quinolinate from iminoaspartate: step 1/1. Functionally, catalyzes the condensation of iminoaspartate with dihydroxyacetone phosphate to form quinolinate. In Xylella fastidiosa (strain Temecula1 / ATCC 700964), this protein is Quinolinate synthase.